The chain runs to 550 residues: T-complex protein 1 subunit eta (550 aa).

Residues 529 to 550 (SESANAGMMPPQGAGRGRGMPM) are disordered.

It belongs to the TCP-1 chaperonin family. As to quaternary structure, heterooligomeric complex of about 850 to 900 kDa that forms two stacked rings, 12 to 16 nm in diameter.

It localises to the cytoplasm. Molecular chaperone; assists the folding of proteins upon ATP hydrolysis. Known to play a role, in vitro, in the folding of actin and tubulin. In yeast may play a role in mitotic spindle formation. This chain is T-complex protein 1 subunit eta (CCT7), found in Saccharomyces cerevisiae (strain ATCC 204508 / S288c) (Baker's yeast).